We begin with the raw amino-acid sequence, 602 residues long: Prostaglandin G/H synthase 1 (602 aa).

An N-terminal signal peptide occupies residues 1–26 (MSRRSLSLQFPLLLLLLLLPPPPVLL). Residues 34 to 72 (PVNPCCYYPCQNQGVCVRFGLDHYQCDCTRTGYSGPNCT) form the EGF-like domain. Cystine bridges form between cysteine 38–cysteine 49, cysteine 39–cysteine 161, cysteine 43–cysteine 59, and cysteine 61–cysteine 71. Asparagine 70, asparagine 106, and asparagine 146 each carry an N-linked (GlcNAc...) asparagine glycan. Residue histidine 209 is the Proton acceptor of the active site. Residue tyrosine 387 is the For cyclooxygenase activity of the active site. A heme b-binding site is contributed by histidine 390. The N-linked (GlcNAc...) asparagine glycan is linked to asparagine 412. Cysteine 571 and cysteine 577 form a disulfide bridge.

The protein belongs to the prostaglandin G/H synthase family. In terms of assembly, homodimer. It depends on heme b as a cofactor.

It is found in the microsome membrane. Its subcellular location is the endoplasmic reticulum membrane. It catalyses the reaction (5Z,8Z,11Z,14Z)-eicosatetraenoate + AH2 + 2 O2 = prostaglandin H2 + A + H2O. The catalysed reaction is (5Z,8Z,11Z,14Z)-eicosatetraenoate + 2 O2 = prostaglandin G2. It carries out the reaction prostaglandin G2 + AH2 = prostaglandin H2 + A + H2O. The enzyme catalyses (9Z,12Z)-octadecadienoate + AH2 + O2 = (9R)-hydroxy-(10E,12Z)-octadecadienoate + A + H2O. It catalyses the reaction (9Z,12Z)-octadecadienoate + AH2 + O2 = (9S)-hydroxy-(10E,12Z)-octadecadienoate + A + H2O. The catalysed reaction is (9Z,12Z)-octadecadienoate + AH2 + O2 = (13S)-hydroxy-(9Z,11E)-octadecadienoate + A + H2O. It carries out the reaction (9Z,12Z)-octadecadienoate + AH2 + O2 = (13R)-hydroxy-(9Z,11E)-octadecadienoate + A + H2O. Its pathway is lipid metabolism; prostaglandin biosynthesis. The cyclooxygenase activity is inhibited by nonsteroidal anti-inflammatory drugs (NSAIDs) including ibuprofen, flurbiprofen, ketoprofen, naproxen, flurbiprofen, anirolac, fenclofenac and diclofenac. Functionally, dual cyclooxygenase and peroxidase that plays an important role in the biosynthesis pathway of prostanoids, a class of C20 oxylipins mainly derived from arachidonate ((5Z,8Z,11Z,14Z)-eicosatetraenoate, AA, C20:4(n-6)), with a particular role in the inflammatory response. The cyclooxygenase activity oxygenates AA to the hydroperoxy endoperoxide prostaglandin G2 (PGG2), and the peroxidase activity reduces PGG2 to the hydroxy endoperoxide prostaglandin H2 (PGH2), the precursor of all 2-series prostaglandins and thromboxanes. This complex transformation is initiated by abstraction of hydrogen at carbon 13 (with S-stereochemistry), followed by insertion of molecular O2 to form the endoperoxide bridge between carbon 9 and 11 that defines prostaglandins. The insertion of a second molecule of O2 (bis-oxygenase activity) yields a hydroperoxy group in PGG2 that is then reduced to PGH2 by two electrons. Involved in the constitutive production of prostanoids in particular in the stomach and platelets. In gastric epithelial cells, it is a key step in the generation of prostaglandins, such as prostaglandin E2 (PGE2), which plays an important role in cytoprotection. In platelets, it is involved in the generation of thromboxane A2 (TXA2), which promotes platelet activation and aggregation, vasoconstriction and proliferation of vascular smooth muscle cells. Can also use linoleate (LA, (9Z,12Z)-octadecadienoate, C18:2(n-6)) as substrate and produce hydroxyoctadecadienoates (HODEs) in a regio- and stereospecific manner, being (9R)-HODE ((9R)-hydroxy-(10E,12Z)-octadecadienoate) and (13S)-HODE ((13S)-hydroxy-(9Z,11E)-octadecadienoate) its major products. The protein is Prostaglandin G/H synthase 1 of Rattus norvegicus (Rat).